We begin with the raw amino-acid sequence, 861 residues long: DNA mismatch repair protein MutS (861 aa).

Gly609–Ser616 is an ATP binding site.

Belongs to the DNA mismatch repair MutS family.

In terms of biological role, this protein is involved in the repair of mismatches in DNA. It is possible that it carries out the mismatch recognition step. This protein has a weak ATPase activity. This Borrelia hermsii (strain HS1 / DAH) protein is DNA mismatch repair protein MutS.